Reading from the N-terminus, the 63-residue chain is uncharacterized protein (63 aa).

This is an uncharacterized protein from Archaeoglobus fulgidus (strain ATCC 49558 / DSM 4304 / JCM 9628 / NBRC 100126 / VC-16).